The following is a 529-amino-acid chain: Bifunctional purine biosynthesis protein PurH (529 aa).

The MGS-like domain occupies 1 to 148 (MQQRRPVRRA…KNHKDVAIVV (148 aa)). Lysine 287 is modified (N6-acetyllysine).

It belongs to the PurH family.

It catalyses the reaction (6R)-10-formyltetrahydrofolate + 5-amino-1-(5-phospho-beta-D-ribosyl)imidazole-4-carboxamide = 5-formamido-1-(5-phospho-D-ribosyl)imidazole-4-carboxamide + (6S)-5,6,7,8-tetrahydrofolate. It carries out the reaction IMP + H2O = 5-formamido-1-(5-phospho-D-ribosyl)imidazole-4-carboxamide. It participates in purine metabolism; IMP biosynthesis via de novo pathway; 5-formamido-1-(5-phospho-D-ribosyl)imidazole-4-carboxamide from 5-amino-1-(5-phospho-D-ribosyl)imidazole-4-carboxamide (10-formyl THF route): step 1/1. It functions in the pathway purine metabolism; IMP biosynthesis via de novo pathway; IMP from 5-formamido-1-(5-phospho-D-ribosyl)imidazole-4-carboxamide: step 1/1. The chain is Bifunctional purine biosynthesis protein PurH from Escherichia fergusonii (strain ATCC 35469 / DSM 13698 / CCUG 18766 / IAM 14443 / JCM 21226 / LMG 7866 / NBRC 102419 / NCTC 12128 / CDC 0568-73).